The sequence spans 216 residues: UPF0502 protein Pmen_2627 (216 aa).

Belongs to the UPF0502 family.

This chain is UPF0502 protein Pmen_2627, found in Ectopseudomonas mendocina (strain ymp) (Pseudomonas mendocina).